The following is a 704-amino-acid chain: DNA ligase (704 aa).

NAD(+) is bound by residues 58-62 (DYEYD), 107-108 (SL), and glutamate 138. Catalysis depends on lysine 140, which acts as the N6-AMP-lysine intermediate. The NAD(+) site is built by arginine 161, glutamate 199, lysine 323, and lysine 347. Zn(2+) contacts are provided by cysteine 441, cysteine 444, cysteine 459, and cysteine 464. The 84-residue stretch at 621-704 (EKKGKLAGLN…LKLIGGENTE (84 aa)) folds into the BRCT domain.

Belongs to the NAD-dependent DNA ligase family. LigA subfamily. The cofactor is Mg(2+). Mn(2+) is required as a cofactor.

The catalysed reaction is NAD(+) + (deoxyribonucleotide)n-3'-hydroxyl + 5'-phospho-(deoxyribonucleotide)m = (deoxyribonucleotide)n+m + AMP + beta-nicotinamide D-nucleotide.. Its function is as follows. DNA ligase that catalyzes the formation of phosphodiester linkages between 5'-phosphoryl and 3'-hydroxyl groups in double-stranded DNA using NAD as a coenzyme and as the energy source for the reaction. It is essential for DNA replication and repair of damaged DNA. This chain is DNA ligase, found in Sulfurihydrogenibium sp. (strain YO3AOP1).